The following is a 391-amino-acid chain: UPF0229 protein BCG9842_B4751 (391 aa).

Over residues 1–16 (MGEENQPNYTISQENW) the composition is skewed to polar residues. Disordered stretches follow at residues 1 to 31 (MGEE…RHQE) and 80 to 117 (HVGQ…GDAA). Positions 21-31 (KGYDDQQRHQE) are enriched in basic and acidic residues. A compositionally biased stretch (gly residues) spans 98–115 (GSGGQKQKGPGKGQGAGD).

Belongs to the UPF0229 family.

In Bacillus cereus (strain G9842), this protein is UPF0229 protein BCG9842_B4751.